The primary structure comprises 752 residues: Double zinc ribbon and ankyrin repeat-containing protein 1 (752 aa).

Residues Ser-160 and Ser-182 each carry the phosphoserine modification. The tract at residues 164 to 187 (IPAYGGGSGSRPPTRQSQSPGFAH) is disordered. Residues 174-183 (RPPTRQSQSP) show a composition bias toward polar residues. 2 DZANK-type zinc fingers span residues 211 to 270 (CAHC…CVVC) and 339 to 387 (CYRC…GSCG). 2 ANK repeats span residues 605-636 (ENRL…DPNC) and 640-669 (DNRP…DIDQ).

Interacts with NINL isoform 2. Associates with DYNC1H1 and multiple dynein intermediate and light chains as well as actin-binding proteins.

The protein resides in the cytoplasm. Its subcellular location is the cytoskeleton. It localises to the microtubule organizing center. It is found in the centrosome. The protein localises to the cilium basal body. Involved in vesicle transport in photoreceptor cells. The protein is Double zinc ribbon and ankyrin repeat-containing protein 1 of Homo sapiens (Human).